We begin with the raw amino-acid sequence, 667 residues long: DNA ligase (667 aa).

NAD(+) is bound by residues 32-36 (DSEYD), 81-82 (SL), and Glu110. The N6-AMP-lysine intermediate role is filled by Lys112. Arg133, Glu167, Lys283, and Lys307 together coordinate NAD(+). Residues Cys401, Cys404, Cys419, and Cys424 each coordinate Zn(2+). The BRCT domain maps to 586–667 (EGHPEFSGKT…FVDKQNELNS (82 aa)).

This sequence belongs to the NAD-dependent DNA ligase family. LigA subfamily. It depends on Mg(2+) as a cofactor. The cofactor is Mn(2+).

It catalyses the reaction NAD(+) + (deoxyribonucleotide)n-3'-hydroxyl + 5'-phospho-(deoxyribonucleotide)m = (deoxyribonucleotide)n+m + AMP + beta-nicotinamide D-nucleotide.. In terms of biological role, DNA ligase that catalyzes the formation of phosphodiester linkages between 5'-phosphoryl and 3'-hydroxyl groups in double-stranded DNA using NAD as a coenzyme and as the energy source for the reaction. It is essential for DNA replication and repair of damaged DNA. In Staphylococcus aureus (strain Mu3 / ATCC 700698), this protein is DNA ligase.